Here is a 570-residue protein sequence, read N- to C-terminus: Formate--tetrahydrofolate ligase (570 aa).

An ATP-binding site is contributed by threonine 65–threonine 72.

It belongs to the formate--tetrahydrofolate ligase family.

It catalyses the reaction (6S)-5,6,7,8-tetrahydrofolate + formate + ATP = (6R)-10-formyltetrahydrofolate + ADP + phosphate. It participates in one-carbon metabolism; tetrahydrofolate interconversion. The polypeptide is Formate--tetrahydrofolate ligase (Shewanella sediminis (strain HAW-EB3)).